We begin with the raw amino-acid sequence, 314 residues long: Cytochrome bo(3) ubiquinol oxidase subunit 2 (314 aa).

The N-terminal stretch at 1–23 is a signal peptide; the sequence is MSKKRYPRLFGILPFLGMLLLSG. A lipid anchor (N-palmitoyl cysteine) is attached at Cys-24. Cys-24 carries the S-diacylglycerol cysteine lipid modification. At 24–42 the chain is on the periplasmic side; the sequence is CNWTLLDPKGQVGIEQKNL. The chain crosses the membrane as a helical span at residues 43-63; that stretch reads ILIATGLMLLVVIPVIIMTVV. Residues 64-86 are Cytoplasmic-facing; it reads FAWKYRASNKAATYTPDWSHSTK. Residues 87-107 form a helical membrane-spanning segment; the sequence is IEAAVWIIPILIIIALGYFTY. The Periplasmic portion of the chain corresponds to 108 to 314; sequence HSTHKLDPYR…SMQPAAGAEE (207 aa). The segment covering 278–293 has biased composition (basic and acidic residues); it reads YEGMNRGRPSHEEAGS. A disordered region spans residues 278 to 314; the sequence is YEGMNRGRPSHEEAGSKDLATTKGVESSMQPAAGAEE.

The protein belongs to the cytochrome c oxidase subunit 2 family. As to quaternary structure, heterooctamer of two A chains, two B chains, two C chains and two D chains.

Its subcellular location is the cell inner membrane. Cytochrome bo(3) ubiquinol terminal oxidase is the component of the aerobic respiratory chain of E.coli that predominates when cells are grown at high aeration. Has proton pump activity across the membrane in addition to electron transfer, pumping 2 protons/electron. In Pseudomonas putida (Arthrobacter siderocapsulatus), this protein is Cytochrome bo(3) ubiquinol oxidase subunit 2 (cyoA).